A 359-amino-acid chain; its full sequence is tRNA N6-adenosine threonylcarbamoyltransferase (359 aa).

Residues His115 and His119 each coordinate Fe cation. Substrate-binding positions include 137-141 (LVSGG), Asp170, Gly183, and Asn283. Asp311 lines the Fe cation pocket. Residues 328–359 (APDSLDLAPRSRWPLDEKSAPLIGTGRRGAKA) are disordered.

It belongs to the KAE1 / TsaD family. Fe(2+) serves as cofactor.

It localises to the cytoplasm. The enzyme catalyses L-threonylcarbamoyladenylate + adenosine(37) in tRNA = N(6)-L-threonylcarbamoyladenosine(37) in tRNA + AMP + H(+). Its function is as follows. Required for the formation of a threonylcarbamoyl group on adenosine at position 37 (t(6)A37) in tRNAs that read codons beginning with adenine. Is involved in the transfer of the threonylcarbamoyl moiety of threonylcarbamoyl-AMP (TC-AMP) to the N6 group of A37, together with TsaE and TsaB. TsaD likely plays a direct catalytic role in this reaction. The protein is tRNA N6-adenosine threonylcarbamoyltransferase of Brucella anthropi (strain ATCC 49188 / DSM 6882 / CCUG 24695 / JCM 21032 / LMG 3331 / NBRC 15819 / NCTC 12168 / Alc 37) (Ochrobactrum anthropi).